The following is a 106-amino-acid chain: UPF0145 protein CLL_A2504 (106 aa).

This sequence belongs to the UPF0145 family.

The protein is UPF0145 protein CLL_A2504 of Clostridium botulinum (strain Eklund 17B / Type B).